Consider the following 394-residue polypeptide: Seipin (394 aa).

Over 1-27 (MVNDPPVPALLWAQEMGHVMAGRARKL) the chain is Cytoplasmic. A helical membrane pass occupies residues 28-48 (LLQFGVFFCTILLLLWVSVFL). The Lumenal portion of the chain corresponds to 49-242 (YGSFYYSYMP…TCAFVGVASN (194 aa)). Residues N88 and N242 are each glycosylated (N-linked (GlcNAc...) asparagine). A helical transmembrane segment spans residues 243 to 263 (FTFLSVIVLFSYMQWVWGGIW). At 264 to 394 (PRQRLSLQVN…VRQRPICSSS (131 aa)) the chain is on the cytoplasmic side. The disordered stretch occupies residues 281 to 394 (RKDIQRKVSA…VRQRPICSSS (114 aa)). The residue at position 289 (S289) is a Phosphoserine. The segment covering 292 to 303 (QPGPQGQEESPQ) has biased composition (low complexity). Residues S346 and S351 each carry the phosphoserine modification.

It belongs to the seipin family. Undecamer (an oligomer having eleven subunits). Oligomerization is important for its function in lipid droplet formation. Interacts with LDAF1 to form an oligomeric complex. Interacts with RAB18. Interacts with ZFYVE1 in a RAB18-dependent manner.

It is found in the endoplasmic reticulum membrane. The protein localises to the lipid droplet. Its function is as follows. Plays a crucial role in the formation of lipid droplets (LDs) which are storage organelles at the center of lipid and energy homeostasis. In association with LDAF1, defines the sites of LD formation in the ER. Also required for growth and maturation of small nascent LDs into larger mature LDs. Mediates the formation and/or stabilization of endoplasmic reticulum-lipid droplets (ER-LD) contacts, facilitating protein and lipid delivery from the ER into growing LDs. Regulates the maturation of ZFYVE1-positive nascent LDs and the function of the RAB18-ZFYVE1 complex in mediating the formation of ER-LD contacts. Binds anionic phospholipids including phosphatidic acid. Plays an important role in the differentiation and development of adipocytes. This is Seipin from Bos taurus (Bovine).